The primary structure comprises 265 residues: Transmembrane protein 270 (265 aa).

3 helical membrane-spanning segments follow: residues 72–92, 130–150, and 185–205; these read PLGQ…WLVL, LFLS…VVTW, and LYWW…YLIT. The disordered stretch occupies residues 229 to 265; it reads QEVEPQEVSGSSLLPSLSASSDSESGTVLPEQETPRE. Over residues 237–253 the composition is skewed to low complexity; it reads SGSSLLPSLSASSDSES.

Its subcellular location is the membrane. This Homo sapiens (Human) protein is Transmembrane protein 270.